The following is a 424-amino-acid chain: Type II methyltransferase M.BspRI (424 aa).

In terms of domain architecture, SAM-dependent MTase C5-type spans 58–408; sequence FNVLSLFCGA…KSIAQFAADY (351 aa). Cys-156 (S-methylcysteine intermediate) is an active-site residue. The residue at position 181 (Cys-181) is an S-methylcysteine; by autocatalysis.

Belongs to the class I-like SAM-binding methyltransferase superfamily. C5-methyltransferase family. In terms of assembly, monomer. In terms of processing, in the absence of DNA, can self-methylate two cysteine residues.

It catalyses the reaction a 2'-deoxycytidine in DNA + S-adenosyl-L-methionine = a 5-methyl-2'-deoxycytidine in DNA + S-adenosyl-L-homocysteine + H(+). Its function is as follows. A methylase, recognizes the double-stranded sequence 5'-GGCC-3', methylates C-3 on both strands, and protects the DNA from cleavage by the BspRI endonuclease. The chain is Type II methyltransferase M.BspRI (bspRIM) from Lysinibacillus sphaericus (Bacillus sphaericus).